The chain runs to 243 residues: 1-(5-phosphoribosyl)-5-[(5-phosphoribosylamino)methylideneamino] imidazole-4-carboxamide isomerase (243 aa).

The active-site Proton acceptor is Asp10. Residue Asp129 is the Proton donor of the active site.

It belongs to the HisA/HisF family.

It localises to the cytoplasm. The enzyme catalyses 1-(5-phospho-beta-D-ribosyl)-5-[(5-phospho-beta-D-ribosylamino)methylideneamino]imidazole-4-carboxamide = 5-[(5-phospho-1-deoxy-D-ribulos-1-ylimino)methylamino]-1-(5-phospho-beta-D-ribosyl)imidazole-4-carboxamide. The protein operates within amino-acid biosynthesis; L-histidine biosynthesis; L-histidine from 5-phospho-alpha-D-ribose 1-diphosphate: step 4/9. This is 1-(5-phosphoribosyl)-5-[(5-phosphoribosylamino)methylideneamino] imidazole-4-carboxamide isomerase from Saccharopolyspora erythraea (strain ATCC 11635 / DSM 40517 / JCM 4748 / NBRC 13426 / NCIMB 8594 / NRRL 2338).